The primary structure comprises 397 residues: Formate-dependent phosphoribosylglycinamide formyltransferase (397 aa).

N(1)-(5-phospho-beta-D-ribosyl)glycinamide-binding positions include 22-23 and glutamate 82; that span reads EL. Residues arginine 114, lysine 155, 160-165, 195-198, and glutamate 203 contribute to the ATP site; these read SSGKGQ and EGFV. In terms of domain architecture, ATP-grasp spans 119–312; the sequence is CLAAEELSLP…EFALHARAIL (194 aa). Mg(2+) contacts are provided by glutamate 271 and glutamate 283. Residues aspartate 290, lysine 360, and 367–368 each bind N(1)-(5-phospho-beta-D-ribosyl)glycinamide; that span reads RR.

It belongs to the PurK/PurT family. In terms of assembly, homodimer.

It carries out the reaction N(1)-(5-phospho-beta-D-ribosyl)glycinamide + formate + ATP = N(2)-formyl-N(1)-(5-phospho-beta-D-ribosyl)glycinamide + ADP + phosphate + H(+). Its pathway is purine metabolism; IMP biosynthesis via de novo pathway; N(2)-formyl-N(1)-(5-phospho-D-ribosyl)glycinamide from N(1)-(5-phospho-D-ribosyl)glycinamide (formate route): step 1/1. Its function is as follows. Involved in the de novo purine biosynthesis. Catalyzes the transfer of formate to 5-phospho-ribosyl-glycinamide (GAR), producing 5-phospho-ribosyl-N-formylglycinamide (FGAR). Formate is provided by PurU via hydrolysis of 10-formyl-tetrahydrofolate. The protein is Formate-dependent phosphoribosylglycinamide formyltransferase of Alcanivorax borkumensis (strain ATCC 700651 / DSM 11573 / NCIMB 13689 / SK2).